A 248-amino-acid chain; its full sequence is Proteasome subunit alpha type-7 (248 aa).

S130 is a glycosylation site (O-linked (GlcNAc) serine). Position 153 is a phosphotyrosine (Y153).

The protein belongs to the peptidase T1A family. The 26S proteasome consists of a 20S proteasome core and two 19S regulatory subunits. The 20S proteasome core is a barrel-shaped complex made of 28 subunits that are arranged in four stacked rings. The two outer rings are each formed by seven alpha subunits, and the two inner rings are formed by seven beta subunits. The proteolytic activity is exerted by three beta-subunits PSMB5, PSMB6 and PSMB7. PSMA7 interacts directly with the PSMG1-PSMG2 heterodimer which promotes 20S proteasome assembly. Interacts with HIF1A. Interacts with RAB7A. Interacts with PRKN. Interacts with ABL1 and ABL2. Interacts with EMAP2. Interacts with MAVS.

Its subcellular location is the cytoplasm. The protein resides in the nucleus. In terms of biological role, component of the 20S core proteasome complex involved in the proteolytic degradation of most intracellular proteins. This complex plays numerous essential roles within the cell by associating with different regulatory particles. Associated with two 19S regulatory particles, forms the 26S proteasome and thus participates in the ATP-dependent degradation of ubiquitinated proteins. The 26S proteasome plays a key role in the maintenance of protein homeostasis by removing misfolded or damaged proteins that could impair cellular functions, and by removing proteins whose functions are no longer required. Associated with the PA200 or PA28, the 20S proteasome mediates ubiquitin-independent protein degradation. This type of proteolysis is required in several pathways including spermatogenesis (20S-PA200 complex) or generation of a subset of MHC class I-presented antigenic peptides (20S-PA28 complex). Inhibits the transactivation function of HIF-1A under both normoxic and hypoxia-mimicking conditions. The interaction with EMAP2 increases the proteasome-mediated HIF-1A degradation under the hypoxic conditions. Plays a role in hepatitis C virus internal ribosome entry site-mediated translation. Mediates nuclear translocation of the androgen receptor (AR) and thereby enhances androgen-mediated transactivation. Promotes MAVS degradation and thereby negatively regulates MAVS-mediated innate immune response. The polypeptide is Proteasome subunit alpha type-7 (PSMA7) (Pongo abelii (Sumatran orangutan)).